A 660-amino-acid polypeptide reads, in one-letter code: tRNA 5-methylaminomethyl-2-thiouridine biosynthesis bifunctional protein MnmC (660 aa).

The interval 1–241 (MNDHPAQDAF…KREILRGHLQ (241 aa)) is tRNA (mnm(5)s(2)U34)-methyltransferase. An FAD-dependent cmnm(5)s(2)U34 oxidoreductase region spans residues 268 to 660 (IGAGLAGCAT…FLLRKLIRGT (393 aa)).

It in the N-terminal section; belongs to the methyltransferase superfamily. tRNA (mnm(5)s(2)U34)-methyltransferase family. The protein in the C-terminal section; belongs to the DAO family. FAD is required as a cofactor.

Its subcellular location is the cytoplasm. It carries out the reaction 5-aminomethyl-2-thiouridine(34) in tRNA + S-adenosyl-L-methionine = 5-methylaminomethyl-2-thiouridine(34) in tRNA + S-adenosyl-L-homocysteine + H(+). Its function is as follows. Catalyzes the last two steps in the biosynthesis of 5-methylaminomethyl-2-thiouridine (mnm(5)s(2)U) at the wobble position (U34) in tRNA. Catalyzes the FAD-dependent demodification of cmnm(5)s(2)U34 to nm(5)s(2)U34, followed by the transfer of a methyl group from S-adenosyl-L-methionine to nm(5)s(2)U34, to form mnm(5)s(2)U34. This is tRNA 5-methylaminomethyl-2-thiouridine biosynthesis bifunctional protein MnmC from Stutzerimonas stutzeri (strain A1501) (Pseudomonas stutzeri).